The sequence spans 219 residues: Transcriptional regulatory protein QseB (219 aa).

In terms of domain architecture, Response regulatory spans 2–116; the sequence is RILLVEDDTL…EVAARLEALV (115 aa). 4-aspartylphosphate is present on D51. A DNA-binding region (ompR/PhoB-type) is located at residues 124–218; it reads SSELRHGQVT…VHGIGYTLGD (95 aa).

In terms of processing, phosphorylated by QseC.

Its subcellular location is the cytoplasm. Its function is as follows. Member of a two-component regulatory system QseB/QseC. Activates the flagella regulon by activating transcription of flhDC. The chain is Transcriptional regulatory protein QseB (qseB) from Salmonella typhimurium (strain LT2 / SGSC1412 / ATCC 700720).